The chain runs to 1273 residues: DNA-directed RNA polymerase subunit beta (1273 aa).

The protein belongs to the RNA polymerase beta chain family. As to quaternary structure, the RNAP catalytic core consists of 2 alpha, 1 beta, 1 beta' and 1 omega subunit. When a sigma factor is associated with the core the holoenzyme is formed, which can initiate transcription.

The enzyme catalyses RNA(n) + a ribonucleoside 5'-triphosphate = RNA(n+1) + diphosphate. DNA-dependent RNA polymerase catalyzes the transcription of DNA into RNA using the four ribonucleoside triphosphates as substrates. The polypeptide is DNA-directed RNA polymerase subunit beta (Onion yellows phytoplasma (strain OY-M)).